A 246-amino-acid chain; its full sequence is Probable septum site-determining protein MinC (246 aa).

This sequence belongs to the MinC family. Interacts with MinD and FtsZ.

Functionally, cell division inhibitor that blocks the formation of polar Z ring septums. Rapidly oscillates between the poles of the cell to destabilize FtsZ filaments that have formed before they mature into polar Z rings. Prevents FtsZ polymerization. The protein is Probable septum site-determining protein MinC of Lachnospira eligens (strain ATCC 27750 / DSM 3376 / VPI C15-48 / C15-B4) (Eubacterium eligens).